The primary structure comprises 146 residues: Hemoglobin subunit beta (146 aa).

At Val1 the chain carries N-acetylvaline. Residues 2 to 146 (HLSGEEKTAL…VANALAHKYH (145 aa)) form the Globin domain. Ser44 carries the post-translational modification Phosphoserine. The residue at position 59 (Lys59) is an N6-acetyllysine. His63 serves as a coordination point for heme b. Lys82 is modified (N6-acetyllysine). His92 is a binding site for heme b. Cys93 is modified (S-nitrosocysteine). Lys144 carries the post-translational modification N6-acetyllysine.

This sequence belongs to the globin family. In terms of assembly, heterotetramer of two alpha chains and two beta chains. In terms of tissue distribution, red blood cells.

Its function is as follows. Involved in oxygen transport from the lung to the various peripheral tissues. The polypeptide is Hemoglobin subunit beta (Tamiasciurus hudsonicus (American red squirrel)).